A 102-amino-acid chain; its full sequence is Small ribosomal subunit protein uS10 (102 aa).

It belongs to the universal ribosomal protein uS10 family. As to quaternary structure, part of the 30S ribosomal subunit.

Its function is as follows. Involved in the binding of tRNA to the ribosomes. The protein is Small ribosomal subunit protein uS10 of Citrifermentans bemidjiense (strain ATCC BAA-1014 / DSM 16622 / JCM 12645 / Bem) (Geobacter bemidjiensis).